The primary structure comprises 207 residues: Thiamine-phosphate synthase (207 aa).

4-amino-2-methyl-5-(diphosphooxymethyl)pyrimidine contacts are provided by residues Gln-35–Lys-39 and Asn-67. Positions 68 and 86 each coordinate Mg(2+). Position 105 (Thr-105) interacts with 4-amino-2-methyl-5-(diphosphooxymethyl)pyrimidine. A 2-[(2R,5Z)-2-carboxy-4-methylthiazol-5(2H)-ylidene]ethyl phosphate-binding site is contributed by Ser-132 to Thr-134. 4-amino-2-methyl-5-(diphosphooxymethyl)pyrimidine is bound at residue Lys-135. Gly-162 lines the 2-[(2R,5Z)-2-carboxy-4-methylthiazol-5(2H)-ylidene]ethyl phosphate pocket.

It belongs to the thiamine-phosphate synthase family. Mg(2+) serves as cofactor.

It catalyses the reaction 2-[(2R,5Z)-2-carboxy-4-methylthiazol-5(2H)-ylidene]ethyl phosphate + 4-amino-2-methyl-5-(diphosphooxymethyl)pyrimidine + 2 H(+) = thiamine phosphate + CO2 + diphosphate. The catalysed reaction is 2-(2-carboxy-4-methylthiazol-5-yl)ethyl phosphate + 4-amino-2-methyl-5-(diphosphooxymethyl)pyrimidine + 2 H(+) = thiamine phosphate + CO2 + diphosphate. The enzyme catalyses 4-methyl-5-(2-phosphooxyethyl)-thiazole + 4-amino-2-methyl-5-(diphosphooxymethyl)pyrimidine + H(+) = thiamine phosphate + diphosphate. It functions in the pathway cofactor biosynthesis; thiamine diphosphate biosynthesis; thiamine phosphate from 4-amino-2-methyl-5-diphosphomethylpyrimidine and 4-methyl-5-(2-phosphoethyl)-thiazole: step 1/1. Condenses 4-methyl-5-(beta-hydroxyethyl)thiazole monophosphate (THZ-P) and 2-methyl-4-amino-5-hydroxymethyl pyrimidine pyrophosphate (HMP-PP) to form thiamine monophosphate (TMP). The polypeptide is Thiamine-phosphate synthase (Pseudomonas putida (strain ATCC 47054 / DSM 6125 / CFBP 8728 / NCIMB 11950 / KT2440)).